A 239-amino-acid polypeptide reads, in one-letter code: 1-(5-phosphoribosyl)-5-[(5-phosphoribosylamino)methylideneamino] imidazole-4-carboxamide isomerase (239 aa).

Residue D8 is the Proton acceptor of the active site. Residue D129 is the Proton donor of the active site.

Belongs to the HisA/HisF family.

It is found in the cytoplasm. The enzyme catalyses 1-(5-phospho-beta-D-ribosyl)-5-[(5-phospho-beta-D-ribosylamino)methylideneamino]imidazole-4-carboxamide = 5-[(5-phospho-1-deoxy-D-ribulos-1-ylimino)methylamino]-1-(5-phospho-beta-D-ribosyl)imidazole-4-carboxamide. It participates in amino-acid biosynthesis; L-histidine biosynthesis; L-histidine from 5-phospho-alpha-D-ribose 1-diphosphate: step 4/9. The polypeptide is 1-(5-phosphoribosyl)-5-[(5-phosphoribosylamino)methylideneamino] imidazole-4-carboxamide isomerase (Bacillus thuringiensis subsp. konkukian (strain 97-27)).